The chain runs to 341 residues: Calcium-binding protein 39 (341 aa).

Belongs to the Mo25 family. Component of a trimeric complex composed of STK11/LKB1, STRAD (STRADA or STRADB) and CAB39/MO25 (CAB39/MO25alpha or CAB39L/MO25beta): the complex tethers STK11/LKB1 in the cytoplasm and stimulates its catalytic activity.

Its subcellular location is the cytoplasm. Component of a complex that binds and activates STK11/LKB1. In the complex, required to stabilize the interaction between CAB39/MO25 (CAB39/MO25alpha or CAB39L/MO25beta) and STK11/LKB1. This is Calcium-binding protein 39 (CAB39) from Bos taurus (Bovine).